A 220-amino-acid polypeptide reads, in one-letter code: Ribosomal RNA small subunit methyltransferase G 1 (220 aa).

Positions 79, 84, and 150 each coordinate S-adenosyl-L-methionine.

The protein belongs to the methyltransferase superfamily. RNA methyltransferase RsmG family.

It is found in the cytoplasm. The enzyme catalyses guanosine(527) in 16S rRNA + S-adenosyl-L-methionine = N(7)-methylguanosine(527) in 16S rRNA + S-adenosyl-L-homocysteine. In terms of biological role, specifically methylates the N7 position of guanine in position 527 of 16S rRNA. This Syntrophobacter fumaroxidans (strain DSM 10017 / MPOB) protein is Ribosomal RNA small subunit methyltransferase G 1.